A 381-amino-acid chain; its full sequence is Guanine nucleotide-binding protein G(olf) subunit alpha (381 aa).

The segment at 1 to 25 (MGCLGNSSKTAEDQGVDEKERREAN) is disordered. Glycine 2 is lipidated: N-palmitoyl glycine. Cysteine 3 carries S-palmitoyl cysteine lipidation. The span at 10–25 (TAEDQGVDEKERREAN) shows a compositional bias: basic and acidic residues. In terms of domain architecture, G-alpha spans 41–381 (ATHRLLLLGA…RMHLKQYELL (341 aa)). A G1 motif region spans residues 44 to 57 (RLLLLGAGESGKST). 6 residues coordinate GTP: glutamate 52, serine 53, glycine 54, lysine 55, serine 56, and threonine 57. Mg(2+) is bound at residue serine 56. The residue at position 178 (threonine 178) is a Phosphothreonine. The segment at 183-191 (DLLRCRVLT) is G2 motif. 3 residues coordinate GTP: leucine 185, arginine 186, and threonine 191. The Mg(2+) site is built by threonine 191 and aspartate 210. A G3 motif region spans residues 206-215 (FHMFDVGGQR). Residues glycine 213, asparagine 279, lysine 280, aspartate 282, and alanine 353 each contribute to the GTP site. The G4 motif stretch occupies residues 275–282 (ILFLNKQD). A G5 motif region spans residues 351–356 (TCAVDT).

The protein belongs to the G-alpha family. G(s) subfamily. G proteins are composed of 3 units; alpha, beta and gamma. The alpha chain contains the guanine nucleotide binding site. Interacts with GAS2L2. Interacts (GDP-bound form) with RIC8B (via C-terminus); promoting GNAL folding and association with the plasma membrane.

Its subcellular location is the cell membrane. It catalyses the reaction GTP + H2O = GDP + phosphate + H(+). In terms of biological role, guanine nucleotide-binding protein (G protein) involved as transducer in olfactory signal transduction controlled by G protein-coupled receptors (GPCRs). Contains the guanine nucleotide binding site and alternates between an active, GTP-bound state and an inactive, GDP-bound state. Signaling by an activated GPCR promotes GDP release and GTP binding. The alpha subunit has a low GTPase activity that converts bound GTP to GDP, thereby terminating the signal. Both GDP release and GTP hydrolysis are modulated by numerous regulatory proteins. GNAL/G(olf) alpha specifically mediates olfactory signal transduction within the olfactory neuroepithelium and the basal ganglia following GPCRs activation. Acts by promoting the specific activation of adenylyl cyclase ADCY3, resulting in increased levels of the signaling molecule cAMP. This is Guanine nucleotide-binding protein G(olf) subunit alpha from Rattus norvegicus (Rat).